Reading from the N-terminus, the 359-residue chain is 3-dehydroquinate synthase (359 aa).

NAD(+)-binding positions include 69-74, 103-107, 127-128, Lys-140, Lys-149, and 167-170; these read DGEKYK, GVVGD, TT, and TLDT. Residues Glu-182, His-245, and His-262 each contribute to the Zn(2+) site.

The protein belongs to the sugar phosphate cyclases superfamily. Dehydroquinate synthase family. Requires Co(2+) as cofactor. The cofactor is Zn(2+). NAD(+) serves as cofactor.

The protein resides in the cytoplasm. It carries out the reaction 7-phospho-2-dehydro-3-deoxy-D-arabino-heptonate = 3-dehydroquinate + phosphate. It functions in the pathway metabolic intermediate biosynthesis; chorismate biosynthesis; chorismate from D-erythrose 4-phosphate and phosphoenolpyruvate: step 2/7. Its function is as follows. Catalyzes the conversion of 3-deoxy-D-arabino-heptulosonate 7-phosphate (DAHP) to dehydroquinate (DHQ). This Ruthia magnifica subsp. Calyptogena magnifica protein is 3-dehydroquinate synthase.